The sequence spans 451 residues: Tubulin alpha chain (451 aa).

Q11 is a binding site for GTP. K40 bears the N6-acetyllysine mark. The GTP site is built by E71, G144, T145, T179, N206, and N228. Residue E71 participates in Mg(2+) binding. The active site involves E254.

The protein belongs to the tubulin family. In terms of assembly, dimer of alpha and beta chains. A typical microtubule is a hollow water-filled tube with an outer diameter of 25 nm and an inner diameter of 15 nM. Alpha-beta heterodimers associate head-to-tail to form protofilaments running lengthwise along the microtubule wall with the beta-tubulin subunit facing the microtubule plus end conferring a structural polarity. Microtubules usually have 13 protofilaments but different protofilament numbers can be found in some organisms and specialized cells. Mg(2+) serves as cofactor. Post-translationally, undergoes a tyrosination/detyrosination cycle, the cyclic removal and re-addition of a C-terminal tyrosine residue by the enzymes tubulin tyrosine carboxypeptidase (TTCP) and tubulin tyrosine ligase (TTL), respectively. Acetylation of alpha chains at Lys-40 stabilizes microtubules and affects affinity and processivity of microtubule motors. This modification has a role in multiple cellular functions, ranging from cell motility, cell cycle progression or cell differentiation to intracellular trafficking and signaling.

Its subcellular location is the cytoplasm. It localises to the cytoskeleton. It carries out the reaction GTP + H2O = GDP + phosphate + H(+). Its function is as follows. Tubulin is the major constituent of microtubules, a cylinder consisting of laterally associated linear protofilaments composed of alpha- and beta-tubulin heterodimers. Microtubules grow by the addition of GTP-tubulin dimers to the microtubule end, where a stabilizing cap forms. Below the cap, tubulin dimers are in GDP-bound state, owing to GTPase activity of alpha-tubulin. This Trypanosoma cruzi protein is Tubulin alpha chain.